We begin with the raw amino-acid sequence, 124 residues long: MAKLTKELFISALKEMSLLEIKELLDGLKEEFGIDPNALAVASAGPSNAPEAEEKTEFTVVMKNFGKNRLPVIKVIREITGLGLLDADKFIKVPDQKVKENVSKALAEDIKAKLEQAGAVIELQ.

Belongs to the bacterial ribosomal protein bL12 family. In terms of assembly, homodimer. Part of the ribosomal stalk of the 50S ribosomal subunit. Forms a multimeric L10(L12)X complex, where L10 forms an elongated spine to which 2 to 4 L12 dimers bind in a sequential fashion. Binds GTP-bound translation factors.

Its function is as follows. Forms part of the ribosomal stalk which helps the ribosome interact with GTP-bound translation factors. Is thus essential for accurate translation. This is Large ribosomal subunit protein bL12 from Phytoplasma australiense.